A 767-amino-acid chain; its full sequence is Polyketide biosynthesis protein PksE (767 aa).

An acyl transferase region spans residues methionine 1–alanine 312. Residues serine 87 and histidine 193 contribute to the active site.

This sequence in the N-terminal section; belongs to the FabD family.

The protein resides in the cytoplasm. It carries out the reaction holo-[ACP] + malonyl-CoA = malonyl-[ACP] + CoA. It participates in antibiotic biosynthesis; bacillaene biosynthesis. In terms of biological role, probably involved in some intermediate steps for the synthesis of the antibiotic polyketide bacillaene which is involved in secondary metabolism. Probably has an acyl transferase activity and could also have a flavin mononucleotide-dependent oxidoreductase activity. In Bacillus subtilis (strain 168), this protein is Polyketide biosynthesis protein PksE (pksE).